We begin with the raw amino-acid sequence, 258 residues long: E3 ubiquitin-protein ligase RNF170 (258 aa).

At 1–24 (MAKYQGEVQSLKLDDDSVIEGVSD) the chain is on the lumenal side. Residues 25 to 45 (QVLVAVVVSFALIATLVYALF) traverse the membrane as a helical segment. Residues 46 to 201 (RNVHQNIHPE…GGLFWMFRIR (156 aa)) lie on the Cytoplasmic side of the membrane. The RING-type zinc finger occupies 87 to 130 (CPICLHQASFPVETNCGHLFCGACIIAYWRYGSWLGAISCPICR). The helical transmembrane segment at 202-222 (IILCLMGAFFYLISPLDFVPE) threads the bilayer. Ala223 is a topological domain (lumenal). A helical transmembrane segment spans residues 224–244 (LFGILGFLDDFFVIFLLLIYI). The Cytoplasmic segment spans residues 245–258 (SIMYREVITQRLTR).

(Microbial infection) Interacts with human cytomegalovirus protein NEC2/UL50; this interaction promotes of UBA7 ubiquitination and subsequent proteasomal degradation. In terms of assembly, constitutively associated with the ERLIN1/ERLIN 2 complex. Interacts with activated ITPR1. As to expression, expressed in the spinal cord.

The protein localises to the endoplasmic reticulum membrane. It catalyses the reaction S-ubiquitinyl-[E2 ubiquitin-conjugating enzyme]-L-cysteine + [acceptor protein]-L-lysine = [E2 ubiquitin-conjugating enzyme]-L-cysteine + N(6)-ubiquitinyl-[acceptor protein]-L-lysine.. The protein operates within protein modification; protein ubiquitination. Its function is as follows. E3 ubiquitin-protein ligase that plays an essential role in stimulus-induced inositol 1,4,5-trisphosphate receptor type 1 (ITPR1) ubiquitination and degradation via the endoplasmic reticulum-associated degradation (ERAD) pathway. Also involved in ITPR1 turnover in resting cells. Selectively inhibits the TLR3-triggered innate immune response by promoting the 'Lys-48'-linked polyubiquitination and degradation of TLR3. This Homo sapiens (Human) protein is E3 ubiquitin-protein ligase RNF170 (RNF170).